We begin with the raw amino-acid sequence, 241 residues long: DnaJ homolog subfamily B member 6 (241 aa).

The interaction with HSP70 stretch occupies residues 2-146 (VDYYEVLGVQ…TGSFFSAFSG (145 aa)). The region spanning 3-69 (DYYEVLGVQR…KKRDIYDKYG (67 aa)) is the J domain. Residues 119–241 (FEDFFGNRRG…KEQLLRLDNK (123 aa)) are interaction with KRT18. Arg135 is modified (omega-N-methylarginine).

Homooligomer. Interacts with BAG3, HSPB8 and STUB1. Interacts with ALKBH1. Interacts with HSP70, KRT18 and PTTG.

It localises to the cytoplasm. It is found in the perinuclear region. The protein resides in the nucleus. The protein localises to the myofibril. Its subcellular location is the sarcomere. It localises to the z line. Functionally, has a stimulatory effect on the ATPase activity of HSP70 in a dose-dependent and time-dependent manner and hence acts as a co-chaperone of HSP70. Plays an indispensable role in the organization of KRT8/KRT18 filaments. Acts as an endogenous molecular chaperone for neuronal proteins including huntingtin. Suppresses aggregation and toxicity of polyglutamine-containing, aggregation-prone proteins. Also reduces cellular toxicity and caspase-3 activity. In Macaca fascicularis (Crab-eating macaque), this protein is DnaJ homolog subfamily B member 6.